The following is a 338-amino-acid chain: Limbic system-associated membrane protein (338 aa).

The signal sequence occupies residues 1-28; it reads MVARAQPDRKQLPLVLLRLLCLLPTGLP. Ig-like C2-type domains follow at residues 29–122, 132–214, and 219–306; these read VRSV…PKTS, PKIS…VRVT, and PTIT…LYLY. N-linked (GlcNAc...) asparagine glycosylation is found at Asn40, Asn66, Asn136, and Asn148. A disulfide bond links Cys53 and Cys111. Disulfide bonds link Cys153-Cys197 and Cys239-Cys290. Asn279, Asn287, Asn300, and Asn315 each carry an N-linked (GlcNAc...) asparagine glycan. Asn315 is lipidated: GPI-anchor amidated asparagine. A propeptide spans 316–338 (removed in mature form); sequence GSVSLAVPLWLLAASLLCLLSKC.

It belongs to the immunoglobulin superfamily. IgLON family.

It is found in the cell membrane. Functionally, mediates selective neuronal growth and axon targeting. Probably serves as a recognition molecule for the formation of limbic connections. In Gallus gallus (Chicken), this protein is Limbic system-associated membrane protein.